A 310-amino-acid chain; its full sequence is Glutaminase (310 aa).

Serine 67, asparagine 118, glutamate 161, asparagine 168, tyrosine 192, tyrosine 244, and valine 262 together coordinate substrate.

The protein belongs to the glutaminase family. As to quaternary structure, homotetramer.

The catalysed reaction is L-glutamine + H2O = L-glutamate + NH4(+). This is Glutaminase from Legionella pneumophila (strain Lens).